Reading from the N-terminus, the 468-residue chain is Ribulose bisphosphate carboxylase large chain (468 aa).

The residue at position 7 (lysine 7) is an N6,N6,N6-trimethyllysine. Asparagine 116 and threonine 166 together coordinate substrate. The active-site Proton acceptor is the lysine 168. Lysine 170 contributes to the substrate binding site. Lysine 194, aspartate 196, and glutamate 197 together coordinate Mg(2+). N6-carboxylysine is present on lysine 194. The active-site Proton acceptor is histidine 287. Substrate-binding residues include arginine 288, histidine 320, and serine 372.

It belongs to the RuBisCO large chain family. Type I subfamily. In terms of assembly, heterohexadecamer of 8 large chains and 8 small chains. Requires Mg(2+) as cofactor.

Its subcellular location is the plastid. The protein localises to the chloroplast. It carries out the reaction 2 (2R)-3-phosphoglycerate + 2 H(+) = D-ribulose 1,5-bisphosphate + CO2 + H2O. The catalysed reaction is D-ribulose 1,5-bisphosphate + O2 = 2-phosphoglycolate + (2R)-3-phosphoglycerate + 2 H(+). Its function is as follows. RuBisCO catalyzes two reactions: the carboxylation of D-ribulose 1,5-bisphosphate, the primary event in carbon dioxide fixation, as well as the oxidative fragmentation of the pentose substrate in the photorespiration process. Both reactions occur simultaneously and in competition at the same active site. The protein is Ribulose bisphosphate carboxylase large chain of Couroupita guianensis (Cannonball tree).